Here is a 469-residue protein sequence, read N- to C-terminus: ATP synthase subunit beta (469 aa).

156–163 (GGAGVGKT) contacts ATP.

The protein belongs to the ATPase alpha/beta chains family. F-type ATPases have 2 components, CF(1) - the catalytic core - and CF(0) - the membrane proton channel. CF(1) has five subunits: alpha(3), beta(3), gamma(1), delta(1), epsilon(1). CF(0) has three main subunits: a(1), b(2) and c(9-12). The alpha and beta chains form an alternating ring which encloses part of the gamma chain. CF(1) is attached to CF(0) by a central stalk formed by the gamma and epsilon chains, while a peripheral stalk is formed by the delta and b chains.

It is found in the cell membrane. It catalyses the reaction ATP + H2O + 4 H(+)(in) = ADP + phosphate + 5 H(+)(out). Produces ATP from ADP in the presence of a proton gradient across the membrane. The catalytic sites are hosted primarily by the beta subunits. In Bacillus mycoides (strain KBAB4) (Bacillus weihenstephanensis), this protein is ATP synthase subunit beta.